The primary structure comprises 226 residues: Sugar fermentation stimulation protein homolog (226 aa).

Belongs to the SfsA family.

The polypeptide is Sugar fermentation stimulation protein homolog (Ruminiclostridium cellulolyticum (strain ATCC 35319 / DSM 5812 / JCM 6584 / H10) (Clostridium cellulolyticum)).